The sequence spans 153 residues: MSEKYVVTWDMLQIHARKLAQRLLPVEQWKGIIAVSRGGLVPGALLARELGIRHVDTVCISSYDHNNQRELKVLKKAEGDGEGFIVVDDLVDTGGTAQAIREIYPKAHFVTIFAKPAGQPLVDDYIVDIPQDTWIEQPWDMGVVFVPPICEGR.

Residues 37-38 (RG), Arg-69, and 88-96 (DDLVDTGGT) contribute to the 5-phospho-alpha-D-ribose 1-diphosphate site. Arg-69 contacts GMP. Asp-89 serves as a coordination point for Mg(2+). Residues Asp-92 and Ile-135 each contribute to the guanine site. 2 residues coordinate xanthine: Asp-92 and Ile-135. Residues 92 to 96 (DTGGT) and 134 to 135 (WI) contribute to the GMP site.

This sequence belongs to the purine/pyrimidine phosphoribosyltransferase family. XGPT subfamily. Homotetramer. The cofactor is Mg(2+).

The protein resides in the cell inner membrane. The enzyme catalyses GMP + diphosphate = guanine + 5-phospho-alpha-D-ribose 1-diphosphate. The catalysed reaction is XMP + diphosphate = xanthine + 5-phospho-alpha-D-ribose 1-diphosphate. It carries out the reaction IMP + diphosphate = hypoxanthine + 5-phospho-alpha-D-ribose 1-diphosphate. The protein operates within purine metabolism; GMP biosynthesis via salvage pathway; GMP from guanine: step 1/1. Its pathway is purine metabolism; XMP biosynthesis via salvage pathway; XMP from xanthine: step 1/1. In terms of biological role, purine salvage pathway enzyme that catalyzes the transfer of the ribosyl-5-phosphate group from 5-phospho-alpha-D-ribose 1-diphosphate (PRPP) to the N9 position of the 6-oxopurines guanine and xanthine to form the corresponding ribonucleotides GMP (guanosine 5'-monophosphate) and XMP (xanthosine 5'-monophosphate), with the release of PPi. To a lesser extent, also acts on hypoxanthine. This Photorhabdus laumondii subsp. laumondii (strain DSM 15139 / CIP 105565 / TT01) (Photorhabdus luminescens subsp. laumondii) protein is Xanthine-guanine phosphoribosyltransferase.